Consider the following 469-residue polypeptide: CBL-interacting serine/threonine-protein kinase 16 (469 aa).

In terms of domain architecture, Protein kinase spans 15–278 (YNIGRLLGTG…MSEIKMIPWF (264 aa)). ATP-binding positions include 21 to 29 (LGTGNFAKV) and K44. The active-site Proton acceptor is the D139. The segment at 157 to 193 (DFGLSALMMPEGLGGRRGSSDDLLHTRCGTPAYVAPE) is activation loop. Position 161 is a phosphoserine (S161). T182 is modified (phosphothreonine). The interval 290–320 (IDETIPSPPEPPTKKKKKDLNEKEDDGASPR) is disordered. One can recognise an NAF domain in the interval 317–342 (ASPRSFNAFQFITSMSSGFDLSNLFE). The tract at residues 346-376 (KPKRMFTSKFPAKSVKERLETAAREMDMRVK) is PPI. The tract at residues 447 to 469 (DDEDDVTTNDNVDTNDNKINNVS) is disordered. The span at 454-469 (TNDNVDTNDNKINNVS) shows a compositional bias: low complexity.

The protein belongs to the protein kinase superfamily. CAMK Ser/Thr protein kinase family. SNF1 subfamily. Part of a K(+)-channel calcium-sensing kinase/phosphatase complex composed by a calcium sensor CBL (CBL1, CBL2, CBL3 or CBL9), a kinase CIPK (CIPK6, CIPK16 or CIPK23), a phosphatase PP2C (AIP1) and a K(+)-channel (AKT1). Interacts with AKT1, CBL1, CBL2, CBL3 and CBL9. Mn(2+) serves as cofactor.

It catalyses the reaction L-seryl-[protein] + ATP = O-phospho-L-seryl-[protein] + ADP + H(+). The catalysed reaction is L-threonyl-[protein] + ATP = O-phospho-L-threonyl-[protein] + ADP + H(+). In terms of biological role, CIPK serine-threonine protein kinases interact with CBL proteins. Binding of a CBL protein to the regulatory NAF domain of CIPK protein lead to the activation of the kinase in a calcium-dependent manner. Downstream of CBL1, CBL2, CBL3 and CBL9, regulates by phosphorylation the K(+) conductance and uptake of AKT1. This Arabidopsis thaliana (Mouse-ear cress) protein is CBL-interacting serine/threonine-protein kinase 16 (CIPK16).